Reading from the N-terminus, the 328-residue chain is Dolichyl-diphosphooligosaccharide--protein glycosyltransferase subunit MAGT1 (328 aa).

Positions 1 to 22 are cleaved as a signal peptide; it reads MAALPVLVLVLLLACGGPRAAG. At 23–177 the chain is on the extracellular side; sequence QKRKEMVLSE…DVNIRVIRPP (155 aa). The region spanning 40–168 is the Thioredoxin domain; sequence WTSKRSVIRM…LARWVADRTD (129 aa). N-linked (GlcNAc...) asparagine glycosylation is present at asparagine 64. Cysteine 80 and cysteine 83 are joined by a disulfide. The chain crosses the membrane as a helical span at residues 178-198; it reads NYAGPLMLGLLLAVIGGLVYL. The Cytoplasmic segment spans residues 199 to 211; that stretch reads RGSNLDFLYNKTG. The chain crosses the membrane as a helical span at residues 212 to 232; the sequence is WAFAALCFVLAMTSGQMWNHI. The Extracellular portion of the chain corresponds to 233 to 257; that stretch reads RGPPYAHKNPHTGQVNYIHGSSQAQ. Residues 258 to 278 traverse the membrane as a helical segment; the sequence is FVAETHIVLLFNGGVTLGMVL. Residues 279-293 are Cytoplasmic-facing; sequence LHEAATSDMDVGKRK. The chain crosses the membrane as a helical span at residues 294 to 314; the sequence is IMCIAGIGLVVFFFSWLLSVF. Residues 315-328 are Extracellular-facing; that stretch reads RSKYHGYPYSFLMS.

The protein belongs to the OST3/OST6 family. As to quaternary structure, accessory component of the STT3B-containing form of the oligosaccharyltransferase (OST) complex. OST exists in two different complex forms which contain common core subunits RPN1, RPN2, OST48, OST4, DAD1 and TMEM258, either STT3A or STT3B as catalytic subunits, and form-specific accessory subunits. OST can form stable complexes with the Sec61 complex or with both the Sec61 and TRAP complexes.

Its subcellular location is the cell membrane. It is found in the endoplasmic reticulum. The protein localises to the endoplasmic reticulum membrane. It participates in protein modification; protein glycosylation. Functionally, accessory component of the STT3B-containing form of the N-oligosaccharyl transferase (OST) complex which catalyzes the transfer of a high mannose oligosaccharide from a lipid-linked oligosaccharide donor to an asparagine residue within an Asn-X-Ser/Thr consensus motif in nascent polypeptide chains. Involved in N-glycosylation of STT3B-dependent substrates. Specifically required for the glycosylation of a subset of acceptor sites that are near cysteine residues; in this function seems to act redundantly with TUSC3. In its oxidized form proposed to form transient mixed disulfides with a glycoprotein substrate to facilitate access of STT3B to the unmodified acceptor site. Also has oxidoreductase-independent functions in the STT3B-containing OST complex possibly involving substrate recognition. Could indirectly play a role in Mg(2+) transport in epithelial cells. The sequence is that of Dolichyl-diphosphooligosaccharide--protein glycosyltransferase subunit MAGT1 from Gallus gallus (Chicken).